Consider the following 145-residue polypeptide: D-aminoacyl-tRNA deacylase (145 aa).

The Gly-cisPro motif, important for rejection of L-amino acids signature appears at 137–138 (GP).

Belongs to the DTD family. As to quaternary structure, homodimer.

It is found in the cytoplasm. The enzyme catalyses glycyl-tRNA(Ala) + H2O = tRNA(Ala) + glycine + H(+). It carries out the reaction a D-aminoacyl-tRNA + H2O = a tRNA + a D-alpha-amino acid + H(+). Functionally, an aminoacyl-tRNA editing enzyme that deacylates mischarged D-aminoacyl-tRNAs. Also deacylates mischarged glycyl-tRNA(Ala), protecting cells against glycine mischarging by AlaRS. Acts via tRNA-based rather than protein-based catalysis; rejects L-amino acids rather than detecting D-amino acids in the active site. By recycling D-aminoacyl-tRNA to D-amino acids and free tRNA molecules, this enzyme counteracts the toxicity associated with the formation of D-aminoacyl-tRNA entities in vivo and helps enforce protein L-homochirality. The sequence is that of D-aminoacyl-tRNA deacylase from Pseudomonas fluorescens (strain Pf0-1).